A 539-amino-acid polypeptide reads, in one-letter code: MAAKMILFDEEARRALERGVNKLADTVKVTLGPKGRNVVLEKKFGSPQIVNDGVTIAKEIELEDPFENMGAQIVREVASKTNDIAGDGTTTATVLAQAMIREGLKNIAAGANPMILRKGIQKAVDVVVEEIRKMSKKVRGKEDITYVASISAGDEEIGKLVADAMEKVTNDGVITVEESKTTETTLEIVEGMQFDRGYISAYMVTDTERMEAVLDDPYILITDKKISTIQDILPLLEQIVQQGRKLLIIAEDVEGEALATLVVNKLRGTLQCVAVKAPGFGDRRKAMLQDIAILTGGQVISEELGLDLREVKLSQLGRARQVKVQKENTIIVDGAGDPSEIKARIQSIKKQIEETTSDFDREKLQERLAKLAGGVAVIHVGAATETELKEKKLRIEDALAATKAAVEEGIVPGGGTALINAIPALDKLIESLTGDEKTGAMIVRKALEEPLRQIAENAGLDGSVIVNKVKESPAGVGFDALNERFVDMFEAGIVDPTKVTRTAIQNAASAAAMLLTTEAVVAEKPEKEKNPPAPAPDMY.

Residues 30–33, 87–91, Gly-414, 479–481, and Asp-495 contribute to the ATP site; these read TLGP, DGTTT, and DAL.

This sequence belongs to the chaperonin (HSP60) family. Forms a cylinder of 14 subunits composed of two heptameric rings stacked back-to-back. Interacts with the co-chaperonin GroES.

Its subcellular location is the cytoplasm. The enzyme catalyses ATP + H2O + a folded polypeptide = ADP + phosphate + an unfolded polypeptide.. Together with its co-chaperonin GroES, plays an essential role in assisting protein folding. The GroEL-GroES system forms a nano-cage that allows encapsulation of the non-native substrate proteins and provides a physical environment optimized to promote and accelerate protein folding. The sequence is that of Chaperonin GroEL from Caldicellulosiruptor bescii (strain ATCC BAA-1888 / DSM 6725 / KCTC 15123 / Z-1320) (Anaerocellum thermophilum).